Consider the following 162-residue polypeptide: Protein snakeskin (162 aa).

At 2-6 the chain is on the cytoplasmic side; the sequence is VSVET. A helical transmembrane segment spans residues 7-27; it reads VGSIFIKALKLIINLVIIFLY. Residues 28–53 lie on the Extracellular side of the membrane; it reads RWGDGGEFLGIGGTWNLNEEKSADAE. Residues 54 to 74 form a helical membrane-spanning segment; sequence IVASGVMVGFLIYTGCHTIAF. Over 75–88 the chain is Cytoplasmic; sequence AFGTTKHKGELCDT. The chain crosses the membrane as a helical span at residues 89-109; that stretch reads IMNVVGCIMWIAVGGVALHYW. Topologically, residues 110 to 128 are extracellular; the sequence is KGYMSDEGFLYVNSERQVG. A helical membrane pass occupies residues 129–149; the sequence is IAMGSLCVIEGALYLLDTVLA. The Cytoplasmic segment spans residues 150 to 162; it reads CIHYSKGDTDYTQ.

As to quaternary structure, forms a complex with Tsp2A and mesh. Interacts with mesh; the interaction may be necessary for the localization of both proteins to the cell apicolateral region.

The protein localises to the apicolateral cell membrane. It is found in the cell junction. It localises to the septate junction. Functionally, required for assembly of smooth septate junctions (sSJs), together with mesh and Tsp2A. May be important for barrier function of the midgut epithelium. The chain is Protein snakeskin from Drosophila melanogaster (Fruit fly).